Reading from the N-terminus, the 96-residue chain is Protein RnfH (96 aa).

This sequence belongs to the UPF0125 (RnfH) family.

The sequence is that of Protein RnfH from Escherichia fergusonii (strain ATCC 35469 / DSM 13698 / CCUG 18766 / IAM 14443 / JCM 21226 / LMG 7866 / NBRC 102419 / NCTC 12128 / CDC 0568-73).